Here is a 71-residue protein sequence, read N- to C-terminus: UPF0346 protein SAK_1533 (71 aa).

This sequence belongs to the UPF0346 family.

The chain is UPF0346 protein SAK_1533 from Streptococcus agalactiae serotype Ia (strain ATCC 27591 / A909 / CDC SS700).